A 119-amino-acid polypeptide reads, in one-letter code: Large ribosomal subunit protein uL18 (119 aa).

Residues Met1–Thr25 are disordered. Positions Lys9–Ser20 are enriched in basic residues.

This sequence belongs to the universal ribosomal protein uL18 family. Part of the 50S ribosomal subunit; part of the 5S rRNA/L5/L18/L25 subcomplex. Contacts the 5S and 23S rRNAs.

Its function is as follows. This is one of the proteins that bind and probably mediate the attachment of the 5S RNA into the large ribosomal subunit, where it forms part of the central protuberance. This Listeria monocytogenes serotype 4b (strain CLIP80459) protein is Large ribosomal subunit protein uL18.